The following is a 575-amino-acid chain: Protein NRD1 (575 aa).

In terms of domain architecture, CID spans 1–153 (MQQDDDFQNF…AIRSKCFAMD (153 aa)). The segment at 225 to 282 (SHTSVGTVAPPQAHTITEYGSRRERERERERYNSRRNRSRSPPAPFSQPSTGRKDRYP) is disordered. Over residues 244-257 (GSRRERERERERYN) the composition is skewed to basic and acidic residues. A phosphoserine mark is found at Ser-263, Ser-265, and Ser-271. The RRM domain occupies 339–409 (RTLFIGGVPL…LPLRTRWGVG (71 aa)). Residues 468–575 (VSSKAISQKM…NQQQQQQQQS (108 aa)) form a disordered region. Polar residues-rich tracts occupy residues 471–482 (KAISQKMPTDSG) and 491–501 (PNKSGSISSIS). Low complexity-rich tracts occupy residues 517–527 (QYVQPMMQQPY) and 549–575 (QQQF…QQQS).

The protein resides in the nucleus. Functionally, plays a role in sequence-specific regulation of nuclear pre-mRNA abundance. The sequence is that of Protein NRD1 (NRD1) from Saccharomyces cerevisiae (strain ATCC 204508 / S288c) (Baker's yeast).